The chain runs to 465 residues: Uronate isomerase (465 aa).

This sequence belongs to the metallo-dependent hydrolases superfamily. Uronate isomerase family.

The enzyme catalyses D-glucuronate = D-fructuronate. The catalysed reaction is aldehydo-D-galacturonate = keto-D-tagaturonate. It participates in carbohydrate metabolism; pentose and glucuronate interconversion. The polypeptide is Uronate isomerase (Streptococcus equi subsp. equi (strain 4047)).